An 833-amino-acid chain; its full sequence is Endoribonuclease YSH1 (833 aa).

Residues histidine 84, histidine 86, aspartate 88, histidine 89, histidine 174, and aspartate 195 each coordinate Zn(2+). Histidine 443 serves as the catalytic Proton donor. Histidine 465 serves as a coordination point for Zn(2+). 3 disordered regions span residues 600–624, 685–707, and 728–767; these read RRAK…SKQE, KRSS…HSAT, and VAPV…DAQL. Composition is skewed to basic and acidic residues over residues 694–707 and 744–759; these read SHDL…HSAT and DKNK…MKTD.

Belongs to the metallo-beta-lactamase superfamily. RNA-metabolizing metallo-beta-lactamase-like family. CPSF2/YSH1 subfamily.

The protein resides in the nucleus. Functionally, component of the cleavage factor I (CF I) involved in pre-mRNA 3'-end processing. The protein is Endoribonuclease YSH1 (YSH1) of Gibberella zeae (strain ATCC MYA-4620 / CBS 123657 / FGSC 9075 / NRRL 31084 / PH-1) (Wheat head blight fungus).